The following is a 236-amino-acid chain: Ribose-5-phosphate isomerase A (236 aa).

Substrate is bound by residues 31–34 (TGST), 84–87 (DGAD), and 97–100 (KGGG). Glu106 functions as the Proton acceptor in the catalytic mechanism. Lys124 is a substrate binding site.

This sequence belongs to the ribose 5-phosphate isomerase family. In terms of assembly, homodimer.

The enzyme catalyses aldehydo-D-ribose 5-phosphate = D-ribulose 5-phosphate. It functions in the pathway carbohydrate degradation; pentose phosphate pathway; D-ribose 5-phosphate from D-ribulose 5-phosphate (non-oxidative stage): step 1/1. Its function is as follows. Catalyzes the reversible conversion of ribose-5-phosphate to ribulose 5-phosphate. The protein is Ribose-5-phosphate isomerase A of Polynucleobacter necessarius subsp. necessarius (strain STIR1).